A 72-amino-acid polypeptide reads, in one-letter code: Translation initiation factor IF-1 (72 aa).

One can recognise an S1-like domain in the interval 1-72 (MSKEDMIEFS…SKGRITFRFK (72 aa)).

It belongs to the IF-1 family. As to quaternary structure, component of the 30S ribosomal translation pre-initiation complex which assembles on the 30S ribosome in the order IF-2 and IF-3, IF-1 and N-formylmethionyl-tRNA(fMet); mRNA recruitment can occur at any time during PIC assembly.

The protein resides in the cytoplasm. In terms of biological role, one of the essential components for the initiation of protein synthesis. Stabilizes the binding of IF-2 and IF-3 on the 30S subunit to which N-formylmethionyl-tRNA(fMet) subsequently binds. Helps modulate mRNA selection, yielding the 30S pre-initiation complex (PIC). Upon addition of the 50S ribosomal subunit IF-1, IF-2 and IF-3 are released leaving the mature 70S translation initiation complex. In Gluconacetobacter diazotrophicus (strain ATCC 49037 / DSM 5601 / CCUG 37298 / CIP 103539 / LMG 7603 / PAl5), this protein is Translation initiation factor IF-1.